The sequence spans 171 residues: Putative phosphoesterase BH1439 (171 aa).

Residue His-34 is the Proton donor of the active site. Short sequence motifs (HXTX) lie at residues 34-37 (HVTL) and 115-118 (HLTI). The active-site Proton acceptor is the His-115.

This sequence belongs to the 2H phosphoesterase superfamily. YjcG family.

This is Putative phosphoesterase BH1439 from Halalkalibacterium halodurans (strain ATCC BAA-125 / DSM 18197 / FERM 7344 / JCM 9153 / C-125) (Bacillus halodurans).